A 421-amino-acid chain; its full sequence is Gamma-glutamyl phosphate reductase (421 aa).

It belongs to the gamma-glutamyl phosphate reductase family.

The protein localises to the cytoplasm. The catalysed reaction is L-glutamate 5-semialdehyde + phosphate + NADP(+) = L-glutamyl 5-phosphate + NADPH + H(+). The protein operates within amino-acid biosynthesis; L-proline biosynthesis; L-glutamate 5-semialdehyde from L-glutamate: step 2/2. Functionally, catalyzes the NADPH-dependent reduction of L-glutamate 5-phosphate into L-glutamate 5-semialdehyde and phosphate. The product spontaneously undergoes cyclization to form 1-pyrroline-5-carboxylate. This chain is Gamma-glutamyl phosphate reductase, found in Pseudomonas aeruginosa (strain ATCC 15692 / DSM 22644 / CIP 104116 / JCM 14847 / LMG 12228 / 1C / PRS 101 / PAO1).